The primary structure comprises 166 residues: Chorion protein S18 (166 aa).

The first 17 residues, Met-1–Ala-17, serve as a signal peptide directing secretion.

Belongs to the chorion protein S15/S18 family.

It localises to the secreted. Functionally, chorion membrane (egg shell) protein; plays a role in protecting the egg from the environment. This chain is Chorion protein S18 (Cp18), found in Drosophila grimshawi (Hawaiian fruit fly).